A 44-amino-acid polypeptide reads, in one-letter code: MRDLKTYLSVAPVLSTLWFGALAGLLIEINRLFPDALTFPFFSF.

The helical transmembrane segment at 7–27 threads the bilayer; that stretch reads YLSVAPVLSTLWFGALAGLLI.

It belongs to the PsaJ family.

The protein localises to the plastid. The protein resides in the chloroplast thylakoid membrane. Functionally, may help in the organization of the PsaE and PsaF subunits. The chain is Photosystem I reaction center subunit IX from Eucalyptus globulus subsp. globulus (Tasmanian blue gum).